The primary structure comprises 366 residues: Galactose-1-phosphate uridylyltransferase (366 aa).

A Phosphoserine modification is found at Ser-27. Residues Cys-54 and Cys-57 each contribute to the Zn(2+) site. Residues Ala-63 and 79 to 80 (ND) contribute to the UDP-alpha-D-glucose site. His-124 provides a ligand contact to Zn(2+). Residue Asn-169 coordinates UDP-alpha-D-glucose. A Zn(2+)-binding site is contributed by His-180. Catalysis depends on His-182, which acts as the Tele-UMP-histidine intermediate. Gln-184 lines the UDP-alpha-D-glucose pocket. The Fe cation site is built by Glu-198, His-297, His-314, and His-316. UDP-alpha-D-glucose-binding positions include 329-332 (KFLV) and 334-335 (FE).

The protein belongs to the galactose-1-phosphate uridylyltransferase type 1 family. As to quaternary structure, homodimer. The cofactor is Zn(2+).

The catalysed reaction is alpha-D-galactose 1-phosphate + UDP-alpha-D-glucose = alpha-D-glucose 1-phosphate + UDP-alpha-D-galactose. The protein operates within carbohydrate metabolism; galactose metabolism. This chain is Galactose-1-phosphate uridylyltransferase (GAL7), found in Saccharomyces cerevisiae (strain ATCC 204508 / S288c) (Baker's yeast).